The following is a 208-amino-acid chain: Putative archaetidylserine decarboxylase proenzyme (208 aa).

Residue serine 172 is the Schiff-base intermediate with substrate; via pyruvic acid of the active site. Residue serine 172 is modified to Pyruvic acid (Ser); by autocatalysis.

Belongs to the phosphatidylserine decarboxylase family. PSD-A subfamily. In terms of assembly, heterodimer of a large membrane-associated beta subunit and a small pyruvoyl-containing alpha subunit. It depends on pyruvate as a cofactor. Post-translationally, is synthesized initially as an inactive proenzyme. Formation of the active enzyme involves a self-maturation process in which the active site pyruvoyl group is generated from an internal serine residue via an autocatalytic post-translational modification. Two non-identical subunits are generated from the proenzyme in this reaction, and the pyruvate is formed at the N-terminus of the alpha chain, which is derived from the carboxyl end of the proenzyme. The post-translation cleavage follows an unusual pathway, termed non-hydrolytic serinolysis, in which the side chain hydroxyl group of the serine supplies its oxygen atom to form the C-terminus of the beta chain, while the remainder of the serine residue undergoes an oxidative deamination to produce ammonia and the pyruvoyl prosthetic group on the alpha chain.

It localises to the cell membrane. It catalyses the reaction archaetidylserine + H(+) = archaetidylethanolamine + CO2. In terms of biological role, catalyzes the formation of archaetidylethanolamine (PtdEtn) from archaetidylserine (PtdSer). This chain is Putative archaetidylserine decarboxylase proenzyme, found in Methanosarcina acetivorans (strain ATCC 35395 / DSM 2834 / JCM 12185 / C2A).